The following is a 340-amino-acid chain: Protein jhp_1168 (340 aa).

Seems to interact with H.pylori HolB.

Could be the functional equivalent of DNA polymerase III delta subunit (HolA). This is Protein jhp_1168 from Helicobacter pylori (strain J99 / ATCC 700824) (Campylobacter pylori J99).